The following is a 329-amino-acid chain: Acetyl-coenzyme A carboxylase carboxyl transferase subunit alpha (329 aa).

Residues 40–294 (QLESLASRRR…RAALERHLGE (255 aa)) form the CoA carboxyltransferase C-terminal domain.

This sequence belongs to the AccA family. Acetyl-CoA carboxylase is a heterohexamer composed of biotin carboxyl carrier protein (AccB), biotin carboxylase (AccC) and two subunits each of ACCase subunit alpha (AccA) and ACCase subunit beta (AccD).

The protein resides in the cytoplasm. It catalyses the reaction N(6)-carboxybiotinyl-L-lysyl-[protein] + acetyl-CoA = N(6)-biotinyl-L-lysyl-[protein] + malonyl-CoA. Its pathway is lipid metabolism; malonyl-CoA biosynthesis; malonyl-CoA from acetyl-CoA: step 1/1. Its function is as follows. Component of the acetyl coenzyme A carboxylase (ACC) complex. First, biotin carboxylase catalyzes the carboxylation of biotin on its carrier protein (BCCP) and then the CO(2) group is transferred by the carboxyltransferase to acetyl-CoA to form malonyl-CoA. This Synechococcus sp. (strain CC9902) protein is Acetyl-coenzyme A carboxylase carboxyl transferase subunit alpha.